The primary structure comprises 292 residues: Protoheme IX farnesyltransferase (292 aa).

Helical transmembrane passes span 15–35 (YLVLTKPGIVSLVLITTLGGM), 49–69 (FWTLLGTGLAAAGSAVLNMVI), 104–124 (VFSLVIMLTFVGVLPALLVAL), 147–167 (IGGISGALPPVIGYVAASGSV), 171–191 (AIALFLLMFMWQPPHFWVLAL), 218–238 (TLLYTASLFPVSLIPYLTGLV), 242–262 (YFVVAVVMNLIYLGLTLKFFF), and 271–291 (LFFFSIIYLAVLFGTMIVDMV).

Belongs to the UbiA prenyltransferase family. Protoheme IX farnesyltransferase subfamily.

It is found in the cell inner membrane. The enzyme catalyses heme b + (2E,6E)-farnesyl diphosphate + H2O = Fe(II)-heme o + diphosphate. It participates in porphyrin-containing compound metabolism; heme O biosynthesis; heme O from protoheme: step 1/1. Functionally, converts heme B (protoheme IX) to heme O by substitution of the vinyl group on carbon 2 of heme B porphyrin ring with a hydroxyethyl farnesyl side group. The sequence is that of Protoheme IX farnesyltransferase from Aquifex aeolicus (strain VF5).